A 406-amino-acid polypeptide reads, in one-letter code: MYTTPAPPEITRRSSEPSTQQGTLGSLEGEKGHLLFPGFVVLVTIFLVVIVTCILWSRKKQKKRRVPYLQVTPSLALPPPRQRAKNIYDFLPRQQTELGRHQLSGFSTESLLSRASDSPEPEVPQASGSLQKHRASVHAVEYTVGVYDNGTVAQMCGPLASSAHRVCDGTSRNNSISSKESNDYVNIPTAEDTSETLTCTKSTPESHLGLPSGQRLEFAEGGHAGCGKATDRTGVWAPGLQGSNSLSEGDDSSQSSNDYVNMTGLDLEDIQESRPRVAFQCCRDYENVPPVVANGSQLQTVEEVTSSTTDRGEPAQRTLPSVYHMAFRPSAWSEDGAMIPGEEASNGDSSDYENVLVPELEGKDWKQGPGTWHPSDERTPSDQAGKFCEAVYPAGSLATETSGEEV.

The tract at residues 1-25 (MYTTPAPPEITRRSSEPSTQQGTLG) is disordered. Topologically, residues 1 to 33 (MYTTPAPPEITRRSSEPSTQQGTLGSLEGEKGH) are extracellular. The helical; Signal-anchor for type III membrane protein transmembrane segment at 34–54 (LLFPGFVVLVTIFLVVIVTCI) threads the bilayer. At 55-406 (LWSRKKQKKR…LATETSGEEV (352 aa)) the chain is on the cytoplasmic side. A disordered region spans residues 109 to 131 (ESLLSRASDSPEPEVPQASGSLQ). A Phosphotyrosine modification is found at Y184. The disordered stretch occupies residues 219–258 (AEGGHAGCGKATDRTGVWAPGLQGSNSLSEGDDSSQSSND). A compositionally biased stretch (low complexity) spans 242 to 258 (GSNSLSEGDDSSQSSND). Phosphotyrosine occurs at positions 259, 285, and 352. A disordered region spans residues 358–406 (PELEGKDWKQGPGTWHPSDERTPSDQAGKFCEAVYPAGSLATETSGEEV).

In terms of assembly, when phosphorylated, interacts with GRB2, PIK3R1 and GRAP2. In terms of processing, phosphorylated on tyrosines upon TCR or BCR activation; which leads to the recruitment of GRB2, PIK3R1 and GRAP2.

It localises to the cell membrane. Functionally, negatively regulates TCR (T-cell antigen receptor)-mediated signaling in T-cells and BCR (B-cell antigen receptor)-mediated signaling in B-cells. The protein is Lymphocyte transmembrane adapter 1 (Lax1) of Rattus norvegicus (Rat).